A 209-amino-acid chain; its full sequence is MRQHVNPLSKNFFEIDPIPPLNEVFENPQLPLHLDIGCASGDFLMELSLKNKNWNYIGIEIREKLVLNANLKIKNREYKNVYFSFGNAINILNNTNNKTLIDAITSISFYFPDPWFKKKHHKRRVIQPEFINLLSNAMRTRSLIFIKTDVQELFEYMELTILESLKFKKLAYEDFRVNESFNPIKTQTKREKYVLLSQFEIYESIYIRI.

Positions 35, 60, 87, and 113 each coordinate S-adenosyl-L-methionine. Asp113 is a catalytic residue. 2 residues coordinate substrate: Lys117 and Asp149.

Belongs to the class I-like SAM-binding methyltransferase superfamily. TrmB family.

The enzyme catalyses guanosine(46) in tRNA + S-adenosyl-L-methionine = N(7)-methylguanosine(46) in tRNA + S-adenosyl-L-homocysteine. Its pathway is tRNA modification; N(7)-methylguanine-tRNA biosynthesis. In terms of biological role, catalyzes the formation of N(7)-methylguanine at position 46 (m7G46) in tRNA. This chain is tRNA (guanine-N(7)-)-methyltransferase, found in Prochlorococcus marinus (strain MIT 9515).